The sequence spans 601 residues: Elongation factor 4 (601 aa).

Positions 5-187 (IRKKNFCIIA…AICKHVPSPR (183 aa)) constitute a tr-type G domain. Residues 17 to 22 (DHGKST) and 134 to 137 (NKID) contribute to the GTP site.

The protein belongs to the TRAFAC class translation factor GTPase superfamily. Classic translation factor GTPase family. LepA subfamily.

The protein localises to the cell inner membrane. It catalyses the reaction GTP + H2O = GDP + phosphate + H(+). Its function is as follows. Required for accurate and efficient protein synthesis under certain stress conditions. May act as a fidelity factor of the translation reaction, by catalyzing a one-codon backward translocation of tRNAs on improperly translocated ribosomes. Back-translocation proceeds from a post-translocation (POST) complex to a pre-translocation (PRE) complex, thus giving elongation factor G a second chance to translocate the tRNAs correctly. Binds to ribosomes in a GTP-dependent manner. The polypeptide is Elongation factor 4 (Borrelia garinii subsp. bavariensis (strain ATCC BAA-2496 / DSM 23469 / PBi) (Borreliella bavariensis)).